Reading from the N-terminus, the 440-residue chain is 23S rRNA (uracil(1939)-C(5))-methyltransferase RlmD (440 aa).

Residues 10-68 enclose the TRAM domain; the sequence is KSTQPQRIEFTVDSLDHHCVGIGRHQGKAIFIEGALPGELVKARILEDKKQYAHAALQQ. Residues Cys81, Cys87, Cys90, and Cys169 each coordinate [4Fe-4S] cluster. Residues Gln273, Phe302, Asn307, Glu323, Asp350, and Asp371 each coordinate S-adenosyl-L-methionine. Residue Cys397 is the Nucleophile of the active site.

The protein belongs to the class I-like SAM-binding methyltransferase superfamily. RNA M5U methyltransferase family. RlmD subfamily.

It catalyses the reaction uridine(1939) in 23S rRNA + S-adenosyl-L-methionine = 5-methyluridine(1939) in 23S rRNA + S-adenosyl-L-homocysteine + H(+). In terms of biological role, catalyzes the formation of 5-methyl-uridine at position 1939 (m5U1939) in 23S rRNA. The sequence is that of 23S rRNA (uracil(1939)-C(5))-methyltransferase RlmD from Aeromonas hydrophila subsp. hydrophila (strain ATCC 7966 / DSM 30187 / BCRC 13018 / CCUG 14551 / JCM 1027 / KCTC 2358 / NCIMB 9240 / NCTC 8049).